We begin with the raw amino-acid sequence, 101 residues long: uncharacterized protein (101 aa).

A signal peptide spans 1–18 (MSINALLYVLSLALLIWT). Residues 62–82 (FQFDSIPSSSLSLSPFPFLFF) form a helical membrane-spanning segment.

It localises to the membrane. This is an uncharacterized protein from Saccharomyces cerevisiae (strain ATCC 204508 / S288c) (Baker's yeast).